The sequence spans 357 residues: MKKINKIALAVGGSGGHIVPALATRETFCKEGIDVLLLGKGLDNYPNLCEQDIPYREIPSGSLSISRPIAAIRNTRSLYIGYKKAKKELIAFGPDVVIGFGSYHSLPVLMAALKKKIPIFLHEQNLVPGKVNKLFSRFAKGVGVSFSPVTKQFSCPAQEVFLPKRVWASSNSSKELSSSYSPIICVVGGSQGAKTLNDNVPPALVKVAKDYPNMYVHHIAGPKGEVASIQYVYSRGGVSFCVKHFEHDMLNILLSSDLVISRAGATILDELLWAQTPSILIPYPGAYGHQEENAKFLVYTIGGGSMILEKQLSNEVLTKNILLALDSKTIKNRREALRAYYQNKSSKSFYQFICECL.

Residues Ser14–Gly16, Asn125, Ser190, and Gln290 contribute to the UDP-N-acetyl-alpha-D-glucosamine site.

This sequence belongs to the glycosyltransferase 28 family. MurG subfamily.

The protein localises to the cell inner membrane. It catalyses the reaction di-trans,octa-cis-undecaprenyl diphospho-N-acetyl-alpha-D-muramoyl-L-alanyl-D-glutamyl-meso-2,6-diaminopimeloyl-D-alanyl-D-alanine + UDP-N-acetyl-alpha-D-glucosamine = di-trans,octa-cis-undecaprenyl diphospho-[N-acetyl-alpha-D-glucosaminyl-(1-&gt;4)]-N-acetyl-alpha-D-muramoyl-L-alanyl-D-glutamyl-meso-2,6-diaminopimeloyl-D-alanyl-D-alanine + UDP + H(+). It participates in cell wall biogenesis; peptidoglycan biosynthesis. In terms of biological role, cell wall formation. Catalyzes the transfer of a GlcNAc subunit on undecaprenyl-pyrophosphoryl-MurNAc-pentapeptide (lipid intermediate I) to form undecaprenyl-pyrophosphoryl-MurNAc-(pentapeptide)GlcNAc (lipid intermediate II). This is UDP-N-acetylglucosamine--N-acetylmuramyl-(pentapeptide) pyrophosphoryl-undecaprenol N-acetylglucosamine transferase from Chlamydia felis (strain Fe/C-56) (Chlamydophila felis).